A 292-amino-acid polypeptide reads, in one-letter code: Probable endonuclease 4 (292 aa).

The Zn(2+) site is built by histidine 70, histidine 111, glutamate 146, aspartate 180, histidine 183, histidine 215, aspartate 228, histidine 230, and glutamate 260.

Belongs to the AP endonuclease 2 family. Zn(2+) serves as cofactor.

The catalysed reaction is Endonucleolytic cleavage to 5'-phosphooligonucleotide end-products.. Endonuclease IV plays a role in DNA repair. It cleaves phosphodiester bonds at apurinic or apyrimidinic (AP) sites, generating a 3'-hydroxyl group and a 5'-terminal sugar phosphate. In Shouchella clausii (strain KSM-K16) (Alkalihalobacillus clausii), this protein is Probable endonuclease 4.